We begin with the raw amino-acid sequence, 338 residues long: Ketol-acid reductoisomerase (NADP(+)) (338 aa).

Positions 1–181 (MRVYYDKDCD…GGGRSGIIET (181 aa)) constitute a KARI N-terminal Rossmann domain. NADP(+) is bound by residues 24–27 (YGSQ), Arg47, Ser50, Ser52, and 82–85 (DENQ). Residue His107 is part of the active site. NADP(+) is bound at residue Gly133. Residues 182-327 (TFKDETETDL…EKLRGMMPWI (146 aa)) enclose the KARI C-terminal knotted domain. Positions 190, 194, 226, and 230 each coordinate Mg(2+). Ser251 is a substrate binding site.

It belongs to the ketol-acid reductoisomerase family. Requires Mg(2+) as cofactor.

It carries out the reaction (2R)-2,3-dihydroxy-3-methylbutanoate + NADP(+) = (2S)-2-acetolactate + NADPH + H(+). The catalysed reaction is (2R,3R)-2,3-dihydroxy-3-methylpentanoate + NADP(+) = (S)-2-ethyl-2-hydroxy-3-oxobutanoate + NADPH + H(+). Its pathway is amino-acid biosynthesis; L-isoleucine biosynthesis; L-isoleucine from 2-oxobutanoate: step 2/4. It functions in the pathway amino-acid biosynthesis; L-valine biosynthesis; L-valine from pyruvate: step 2/4. In terms of biological role, involved in the biosynthesis of branched-chain amino acids (BCAA). Catalyzes an alkyl-migration followed by a ketol-acid reduction of (S)-2-acetolactate (S2AL) to yield (R)-2,3-dihydroxy-isovalerate. In the isomerase reaction, S2AL is rearranged via a Mg-dependent methyl migration to produce 3-hydroxy-3-methyl-2-ketobutyrate (HMKB). In the reductase reaction, this 2-ketoacid undergoes a metal-dependent reduction by NADPH to yield (R)-2,3-dihydroxy-isovalerate. In Chromohalobacter salexigens (strain ATCC BAA-138 / DSM 3043 / CIP 106854 / NCIMB 13768 / 1H11), this protein is Ketol-acid reductoisomerase (NADP(+)).